Here is a 552-residue protein sequence, read N- to C-terminus: CTP synthase (552 aa).

Residues 1-271 are amidoligase domain; the sequence is MASAASSKHL…DAFVVRRLGL (271 aa). A CTP-binding site is contributed by S18. Position 18 (S18) interacts with UTP. ATP-binding positions include 19–24 and D76; that span reads SLGKGL. D76 and E145 together coordinate Mg(2+). Residues 152-154, 192-197, and K228 each bind CTP; these read DIE and KTKPTQ. UTP contacts are provided by residues 192–197 and K228; that span reads KTKPTQ. The Glutamine amidotransferase type-1 domain occupies 296–546; that stretch reads TIALVGKYVD…IEAALKYSAG (251 aa). G359 contributes to the L-glutamine binding site. The active-site Nucleophile; for glutamine hydrolysis is the C386. Residues 387-390, E410, and R472 each bind L-glutamine; that span reads LGLQ. Active-site residues include H519 and E521.

This sequence belongs to the CTP synthase family. Homotetramer.

It catalyses the reaction UTP + L-glutamine + ATP + H2O = CTP + L-glutamate + ADP + phosphate + 2 H(+). The enzyme catalyses L-glutamine + H2O = L-glutamate + NH4(+). It carries out the reaction UTP + NH4(+) + ATP = CTP + ADP + phosphate + 2 H(+). It participates in pyrimidine metabolism; CTP biosynthesis via de novo pathway; CTP from UDP: step 2/2. With respect to regulation, allosterically activated by GTP, when glutamine is the substrate; GTP has no effect on the reaction when ammonia is the substrate. The allosteric effector GTP functions by stabilizing the protein conformation that binds the tetrahedral intermediate(s) formed during glutamine hydrolysis. Inhibited by the product CTP, via allosteric rather than competitive inhibition. Functionally, catalyzes the ATP-dependent amination of UTP to CTP with either L-glutamine or ammonia as the source of nitrogen. Regulates intracellular CTP levels through interactions with the four ribonucleotide triphosphates. The sequence is that of CTP synthase from Thermobifida fusca (strain YX).